The chain runs to 168 residues: Xanthine-guanine phosphoribosyltransferase (168 aa).

Residues 43–44 and 102–110 contribute to the 5-phospho-alpha-D-ribose 1-diphosphate site; these read RG and DDLVDTGAT. Residue D103 coordinates Mg(2+). 2 residues coordinate guanine: D106 and I149. D106 and I149 together coordinate xanthine. GMP-binding positions include 106–110 and 148–149; these read DTGAT and WI.

It belongs to the purine/pyrimidine phosphoribosyltransferase family. XGPT subfamily. Homotetramer. Requires Mg(2+) as cofactor.

The protein resides in the cell inner membrane. It catalyses the reaction GMP + diphosphate = guanine + 5-phospho-alpha-D-ribose 1-diphosphate. It carries out the reaction XMP + diphosphate = xanthine + 5-phospho-alpha-D-ribose 1-diphosphate. The enzyme catalyses IMP + diphosphate = hypoxanthine + 5-phospho-alpha-D-ribose 1-diphosphate. Its pathway is purine metabolism; GMP biosynthesis via salvage pathway; GMP from guanine: step 1/1. The protein operates within purine metabolism; XMP biosynthesis via salvage pathway; XMP from xanthine: step 1/1. Its function is as follows. Purine salvage pathway enzyme that catalyzes the transfer of the ribosyl-5-phosphate group from 5-phospho-alpha-D-ribose 1-diphosphate (PRPP) to the N9 position of the 6-oxopurines guanine and xanthine to form the corresponding ribonucleotides GMP (guanosine 5'-monophosphate) and XMP (xanthosine 5'-monophosphate), with the release of PPi. To a lesser extent, also acts on hypoxanthine. The protein is Xanthine-guanine phosphoribosyltransferase of Nitrobacter winogradskyi (strain ATCC 25391 / DSM 10237 / CIP 104748 / NCIMB 11846 / Nb-255).